The following is a 257-amino-acid chain: Ribonuclease HII (257 aa).

The RNase H type-2 domain occupies 71–257 (ELIAGIDEVG…EPIKSMVNFK (187 aa)). Aspartate 77, glutamate 78, and aspartate 169 together coordinate a divalent metal cation.

This sequence belongs to the RNase HII family. The cofactor is Mn(2+). Mg(2+) serves as cofactor.

The protein resides in the cytoplasm. It carries out the reaction Endonucleolytic cleavage to 5'-phosphomonoester.. Functionally, endonuclease that specifically degrades the RNA of RNA-DNA hybrids. This Lactococcus lactis subsp. cremoris (strain MG1363) protein is Ribonuclease HII (rnhB).